The chain runs to 489 residues: Bifunctional protein HldE (489 aa).

The tract at residues 1–328 (METENIHSFD…ELKAQLQDQP (328 aa)) is ribokinase. ATP is bound at residue 206 to 209 (NKKE). Residue Asp276 is part of the active site. The segment at 357–489 (LTNGCFDLLH…IIQDIRNGRG (133 aa)) is cytidylyltransferase.

It in the N-terminal section; belongs to the carbohydrate kinase PfkB family. In the C-terminal section; belongs to the cytidylyltransferase family. Homodimer.

It carries out the reaction D-glycero-beta-D-manno-heptose 7-phosphate + ATP = D-glycero-beta-D-manno-heptose 1,7-bisphosphate + ADP + H(+). The enzyme catalyses D-glycero-beta-D-manno-heptose 1-phosphate + ATP + H(+) = ADP-D-glycero-beta-D-manno-heptose + diphosphate. Its pathway is nucleotide-sugar biosynthesis; ADP-L-glycero-beta-D-manno-heptose biosynthesis; ADP-L-glycero-beta-D-manno-heptose from D-glycero-beta-D-manno-heptose 7-phosphate: step 1/4. It functions in the pathway nucleotide-sugar biosynthesis; ADP-L-glycero-beta-D-manno-heptose biosynthesis; ADP-L-glycero-beta-D-manno-heptose from D-glycero-beta-D-manno-heptose 7-phosphate: step 3/4. In terms of biological role, catalyzes the phosphorylation of D-glycero-D-manno-heptose 7-phosphate at the C-1 position to selectively form D-glycero-beta-D-manno-heptose-1,7-bisphosphate. Its function is as follows. Catalyzes the ADP transfer from ATP to D-glycero-beta-D-manno-heptose 1-phosphate, yielding ADP-D-glycero-beta-D-manno-heptose. The protein is Bifunctional protein HldE of Desulfatibacillum aliphaticivorans.